Consider the following 429-residue polypeptide: 3-phosphoshikimate 1-carboxyvinyltransferase (429 aa).

Positions 11, 12, and 16 each coordinate 3-phosphoshikimate. Position 11 (Lys-11) interacts with phosphoenolpyruvate. Phosphoenolpyruvate is bound by residues Gly-82 and Arg-110. Residues Ser-155, Gln-157, Asp-302, and Lys-329 each coordinate 3-phosphoshikimate. Gln-157 contacts phosphoenolpyruvate. The active-site Proton acceptor is Asp-302. Positions 333 and 385 each coordinate phosphoenolpyruvate.

Belongs to the EPSP synthase family. Monomer.

It localises to the cytoplasm. It catalyses the reaction 3-phosphoshikimate + phosphoenolpyruvate = 5-O-(1-carboxyvinyl)-3-phosphoshikimate + phosphate. Its pathway is metabolic intermediate biosynthesis; chorismate biosynthesis; chorismate from D-erythrose 4-phosphate and phosphoenolpyruvate: step 6/7. Catalyzes the transfer of the enolpyruvyl moiety of phosphoenolpyruvate (PEP) to the 5-hydroxyl of shikimate-3-phosphate (S3P) to produce enolpyruvyl shikimate-3-phosphate and inorganic phosphate. This Helicobacter acinonychis (strain Sheeba) protein is 3-phosphoshikimate 1-carboxyvinyltransferase.